A 239-amino-acid polypeptide reads, in one-letter code: 2,3,4,5-tetrahydropyridine-2,6-dicarboxylate N-acetyltransferase (239 aa).

Belongs to the transferase hexapeptide repeat family. DapH subfamily.

The catalysed reaction is (S)-2,3,4,5-tetrahydrodipicolinate + acetyl-CoA + H2O = L-2-acetamido-6-oxoheptanedioate + CoA. It participates in amino-acid biosynthesis; L-lysine biosynthesis via DAP pathway; LL-2,6-diaminopimelate from (S)-tetrahydrodipicolinate (acetylase route): step 1/3. Functionally, catalyzes the transfer of an acetyl group from acetyl-CoA to tetrahydrodipicolinate. The protein is 2,3,4,5-tetrahydropyridine-2,6-dicarboxylate N-acetyltransferase of Staphylococcus aureus (strain Newman).